We begin with the raw amino-acid sequence, 185 residues long: Elongation factor P (185 aa).

It belongs to the elongation factor P family.

It localises to the cytoplasm. Its pathway is protein biosynthesis; polypeptide chain elongation. Its function is as follows. Involved in peptide bond synthesis. Stimulates efficient translation and peptide-bond synthesis on native or reconstituted 70S ribosomes in vitro. Probably functions indirectly by altering the affinity of the ribosome for aminoacyl-tRNA, thus increasing their reactivity as acceptors for peptidyl transferase. The chain is Elongation factor P from Streptococcus pyogenes serotype M28 (strain MGAS6180).